A 165-amino-acid chain; its full sequence is GPI-anchored protein LORELEI (165 aa).

The first 20 residues, 1–20, serve as a signal peptide directing secretion; that stretch reads MELILLFFFLMALLVSLSSS. The segment at 82–93 is required for its function in pollen tube reception; that stretch reads PYVSQINDMNSD. N-linked (GlcNAc...) asparagine glycosylation occurs at asparagine 137. Serine 139 carries the GPI-anchor amidated serine lipid modification. The propeptide at 140 to 165 is removed in mature form; that stretch reads TADSTPRFISLLISAATAVFALLVLT.

As to quaternary structure, interacts with FER. As to expression, expressed in leaves, buds, flowers and stems. Highest expression in the synergid cells of the female gametophyte.

It is found in the cell membrane. Female gametophyte-specific component of the signaling pathway required for fertilization. Required for reception of the pollen tube by the female gametophyte. Acts specifically at the synergid cell surface for pollen tube reception. Plays a role in double fertilization and early seed development. Component of the FER-regulated Rho GTPase signaling complex. Acts as a chaperone and coreceptor for FER. Required for localization of FER to the plasma membrane. The protein is GPI-anchored protein LORELEI (LRE) of Arabidopsis thaliana (Mouse-ear cress).